Reading from the N-terminus, the 54-residue chain is AVSVDCSEYPKPACTLEHRPLCGSDNKTYGNKCNFCNAVVESNGTLTLSHFGKC.

Residues 4–54 (VDCSEYPKPACTLEHRPLCGSDNKTYGNKCNFCNAVVESNGTLTLSHFGKC) enclose the Kazal-like domain. Cystine bridges form between cysteine 6–cysteine 36, cysteine 14–cysteine 33, and cysteine 22–cysteine 54. Residue asparagine 43 is glycosylated (N-linked (GlcNAc...) asparagine).

The protein resides in the secreted. The polypeptide is Ovomucoid (Pavo muticus (Green peafowl)).